Here is a 313-residue protein sequence, read N- to C-terminus: Pyrimidine-specific ribonucleoside hydrolase RihB (313 aa).

Catalysis depends on glutamate 11, which acts as the Proton acceptor. The Ca(2+) site is built by glutamate 11, aspartate 16, and valine 124. 2 residues coordinate substrate: glutamine 227 and histidine 239. Residue aspartate 240 coordinates Ca(2+).

It belongs to the IUNH family. RihB subfamily. Homotetramer. Ca(2+) serves as cofactor.

It carries out the reaction a pyrimidine ribonucleoside + H2O = a pyrimidine nucleobase + D-ribose. Functionally, hydrolyzes cytidine or uridine to ribose and cytosine or uracil, respectively. Has a clear preference for cytidine over uridine. Strictly specific for ribonucleosides. This is Pyrimidine-specific ribonucleoside hydrolase RihB from Shigella flexneri serotype 5b (strain 8401).